The following is a 171-amino-acid chain: Co-chaperone protein HscB (171 aa).

A J domain is found at 2–74 (DYFTLFGLPA…LTRAEYLLSL (73 aa)).

It belongs to the HscB family. Interacts with HscA and stimulates its ATPase activity. Interacts with IscU.

Functionally, co-chaperone involved in the maturation of iron-sulfur cluster-containing proteins. Seems to help targeting proteins to be folded toward HscA. This is Co-chaperone protein HscB from Klebsiella pneumoniae (strain 342).